Consider the following 1347-residue polypeptide: Spermatogenesis-associated protein 31A5 (1347 aa).

The helical transmembrane segment at 23-43 threads the bilayer; it reads PWVLDIFLTLVFALGFFFLLL. Disordered regions lie at residues 55–87, 106–233, 373–397, 628–657, 900–955, 1084–1161, and 1313–1335; these read PSPS…GREC, GPHL…RDST, EQDT…GPQK, DESP…KEAQ, RGIP…REAV, VHEE…PSVS, and KAVS…SHHH. Over residues 60-82 the composition is skewed to basic residues; that stretch reads GKRKCPVGRRRRPRGRMKNHSLR. Residues 165-178 show a composition bias toward polar residues; sequence LASTPSPGPMTTSV. Positions 198–211 are enriched in pro residues; sequence PEPPALFPHPPHTP. 2 stretches are compositionally biased toward polar residues: residues 631 to 651 and 927 to 948; these read PGTS…STGE and LTYS…SSKA. 2 stretches are compositionally biased toward basic and acidic residues: residues 1108 to 1127 and 1137 to 1146; these read HKSE…RLEG and RKTEDTHQDE.

This sequence belongs to the SPATA31 family.

It localises to the membrane. May play a role in spermatogenesis. The chain is Spermatogenesis-associated protein 31A5 (SPATA31A5) from Homo sapiens (Human).